Consider the following 555-residue polypeptide: MSNSNKLIAEKNGSRYGRMIHPWLRKKQDMLADTPSRREGMTYEEELSKRQQGGVFIFDIAMQLTHGKGEHGLSGVAATLFNRFFNVHSLKRCDFRDVAAACVFLAGKNEDAPKKLKYVVTQLWQFKYPHNKQFQSEQHFLDQCNVVTLIEDVLLKTISFDINVDLPHQYVLKLMRDVEKGRNVYKDMVKTAYYMATDVLIITDWSVRYSCASIATACVNIAAFFHNINMDDIVPFELSDRWYRLEDQSMTREEVEAMTKEFLDIFSRNPQFHIGSLKKIDPLGKVKIVGMPPQVSSTVTPSGSSSNLKKIDLESYKGRPKPLSNSSDSPSTRPSFLPDVKNQKVVEQELMEQRMKEAAQQKIHRNGHRPSSSSHPLHHHSTSSSASNNSNHQNRSSSGLSAHQHQKPYNEDSRSAKRSMMYEETNSSKKPRIDYKMSFVASSSTTIATMHNDHFSQTTHQQNISTYARGVNEMMLNQVAPPPLMSVSAQPSTYQKMCMEYQRNPADSRHTMSSTQQISPPDEPSPPVSQILLPPPPPPPILPPRLDEMEEGELV.

Disordered regions lie at residues 315–429 (SYKG…NSSK) and 505–555 (PADS…GELV). The segment covering 321–335 (KPLSNSSDSPSTRPS) has biased composition (low complexity). Over residues 341–359 (KNQKVVEQELMEQRMKEAA) the composition is skewed to basic and acidic residues. Over residues 382-398 (TSSSASNNSNHQNRSSS) the composition is skewed to low complexity. Residues 521-543 (PDEPSPPVSQILLPPPPPPPILP) show a composition bias toward pro residues.

This sequence belongs to the cyclin family. Cyclin C subfamily.

Regulatory subunit of the cyclin-dependent kinase pair (CDK9/cyclin T) complex, also called positive transcription elongation factor B (P-TEFb), which is proposed to facilitate the transition from abortive to production elongation by phosphorylating the CTD (carboxy-terminal domain) of the large subunit of RNA polymerase II (RNAP II). This is Cyclin-T1.2 (cit-1.2) from Caenorhabditis elegans.